We begin with the raw amino-acid sequence, 319 residues long: ATP-dependent 6-phosphofructokinase (319 aa).

G11 provides a ligand contact to ATP. Residue 21-25 (RAVVR) participates in ADP binding. ATP is bound by residues 72 to 73 (RC) and 102 to 105 (GDGS). Mg(2+) is bound at residue D103. 125 to 127 (TID) provides a ligand contact to substrate. D127 functions as the Proton acceptor in the catalytic mechanism. An ADP-binding site is contributed by R154. Substrate contacts are provided by residues R162 and 169 to 171 (MGR). Residues 185–187 (GAE), R211, and 213–215 (KKH) each bind ADP. Substrate is bound by residues E222, R243, and 249-252 (HVQR).

It belongs to the phosphofructokinase type A (PFKA) family. ATP-dependent PFK group I subfamily. Prokaryotic clade 'B1' sub-subfamily. In terms of assembly, homotetramer. The cofactor is Mg(2+).

The protein localises to the cytoplasm. The catalysed reaction is beta-D-fructose 6-phosphate + ATP = beta-D-fructose 1,6-bisphosphate + ADP + H(+). It functions in the pathway carbohydrate degradation; glycolysis; D-glyceraldehyde 3-phosphate and glycerone phosphate from D-glucose: step 3/4. Allosterically activated by ADP and other diphosphonucleosides, and allosterically inhibited by phosphoenolpyruvate. Its function is as follows. Catalyzes the phosphorylation of D-fructose 6-phosphate to fructose 1,6-bisphosphate by ATP, the first committing step of glycolysis. The protein is ATP-dependent 6-phosphofructokinase of Geobacillus sp. (strain WCH70).